A 205-amino-acid chain; its full sequence is Urease accessory protein UreG (205 aa).

G12–T19 contacts GTP.

This sequence belongs to the SIMIBI class G3E GTPase family. UreG subfamily. Homodimer. UreD, UreF and UreG form a complex that acts as a GTP-hydrolysis-dependent molecular chaperone, activating the urease apoprotein by helping to assemble the nickel containing metallocenter of UreC. The UreE protein probably delivers the nickel.

Its subcellular location is the cytoplasm. Functionally, facilitates the functional incorporation of the urease nickel metallocenter. This process requires GTP hydrolysis, probably effectuated by UreG. The chain is Urease accessory protein UreG from Pseudomonas savastanoi pv. phaseolicola (strain 1448A / Race 6) (Pseudomonas syringae pv. phaseolicola (strain 1448A / Race 6)).